The sequence spans 347 residues: Rhodopsin (347 aa).

Topologically, residues 1–33 (TEGPDFYIPMVNTTGVVRSPYEYPQYYLVNPAA) are extracellular. Asparagine 12 carries N-linked (GlcNAc...) asparagine glycosylation. The helical transmembrane segment at 34-58 (FAVLGAYMFFLIIIGFPINFLTLYV) threads the bilayer. Residues 59-70 (TLEHKKLRTPLN) are Cytoplasmic-facing. A helical transmembrane segment spans residues 71-93 (YILLNLAVADLFMVIGGFTTTMY). The Extracellular segment spans residues 94–107 (SSMHGYFVLGRLGC). An intrachain disulfide couples cysteine 107 to cysteine 184. Residues 108–130 (NIEGFFATLGGMISLWSLAVLAI) form a helical membrane-spanning segment. The 'Ionic lock' involved in activated form stabilization motif lies at 131–133 (ERW). At 131–149 (ERWVVVCKPISNFRFGENH) the chain is on the cytoplasmic side. The chain crosses the membrane as a helical span at residues 150–170 (AIMGVSLTWVMALACTVPPLV). Over 171-199 (GWSRYIPEGMQCACGIDYYTRAEGYNNES) the chain is Extracellular. N-linked (GlcNAc...) asparagine glycosylation occurs at asparagine 197. The chain crosses the membrane as a helical span at residues 200–221 (FVIYMFTFHFLFPMFIIFFCYG). Residues 222–249 (RLLCAVKEAAAAQQESETTQRAEREVTR) lie on the Cytoplasmic side of the membrane. The helical transmembrane segment at 250–271 (MVILMVIGYLVCWLPYASVAWF) threads the bilayer. Over 272 to 283 (IFTHKGSEFGPL) the chain is Extracellular. The helical transmembrane segment at 284–305 (FMAVPSFFAKSSSIYNPIIYIC) threads the bilayer. Lysine 293 carries the post-translational modification N6-(retinylidene)lysine. The Cytoplasmic portion of the chain corresponds to 306 to 347 (MNKQFRQCMITTLFCGKNPFEGQEEDSSTKTEASSASSVSPA). A lipid anchor (S-palmitoyl cysteine) is attached at cysteine 320. Residues 326-347 (EGQEEDSSTKTEASSASSVSPA) are disordered. Positions 335-347 (KTEASSASSVSPA) are enriched in low complexity.

It belongs to the G-protein coupled receptor 1 family. Opsin subfamily. In terms of processing, phosphorylated on some or all of the serine and threonine residues present in the C-terminal region. Post-translationally, contains one covalently linked retinal chromophore.

It localises to the membrane. The protein localises to the cell projection. It is found in the cilium. The protein resides in the photoreceptor outer segment. Photoreceptor required for image-forming vision at low light intensity. While most salt water fish species use retinal as chromophore, most freshwater fish use 3-dehydroretinal, or a mixture of retinal and 3-dehydroretinal. Light-induced isomerization of 11-cis to all-trans retinal triggers a conformational change that activates signaling via G-proteins. Subsequent receptor phosphorylation mediates displacement of the bound G-protein alpha subunit by arrestin and terminates signaling. The protein is Rhodopsin (rho) of Sargocentron tiere (Blue lined squirrelfish).